Reading from the N-terminus, the 881-residue chain is MYMSTDEIREKFLQFFESKGHLRLPSFSLIPKNDKSLLLINAGMAPLKPYFLGIEEPPRRRITTCQKCIRTPDIDKVGKTARHATFFEMLGNFSFGDYFKKEAITWAWEFVTEILKLPKERLWVTIYEEDDEAFEIWHKEVGLEEGRIKRMGKEDNFWEIGTGPCGPCSEIYFDRGVDKGCGKETCGIGCDCDRYVEFWNLVFTQFDKDENGVYHRLKNPNIDTGMGLERIAAIMQGVDSLFDIDIVKAIRDKICEITGCEYGKDSEKDVSIRVITDHIRGTVFMIGDGILPSNEGRGYVLRRLIRRAARHGRMLGKRETFLHLIVDTVIEAYKSPYPELIQKGEYIKKVLYNEESRFNQTIDIGLELLENEIDRLKKNKENVLKGEIAFKLYDTYGFPLDLTREIAAEKGIIVDQAGFDRLMQEQKERARMAQKELENIGWKDINITIEDEVETVFVGYDTLETQSRVLKIFSNDDEVSYAKEGDICYIILDKTPFYAESGGQVADKGVLETEGGVAEVLDVKKGPKGTILHKAKVIKGEIAVDNNIFAKVNKNLRLATMKNHTATHLLHSSLRRILGEHATQSGSLVEPERLRFDFAHFEPLSEEQIVEIEKMVNDIIQQAIPVEKIQTDLDSAIKMGATALFDEKYSNIVRVIKIGDFSMELCGGTHVDNTGQIGMFKIISESSVAAGVRRIEAITGNKVYEFMLNNQKVLKDIRNKLKANSDSEIVAKINQLEERITALEKELEKHKLLLVDNELSLLYNEGLQIGEFRLIINKKETHDTDYIRLLTDRVREKDSKAIVLNLIKQDKKAIVLMACSKEAVKKGIDCGKTVKDVCEVLGGKGGGRPDFAQGGGNKIENLDLAAQRAIELIKSSIEGGS.

His-564, His-568, Cys-666, and His-670 together coordinate Zn(2+).

Belongs to the class-II aminoacyl-tRNA synthetase family. Zn(2+) is required as a cofactor.

Its subcellular location is the cytoplasm. It carries out the reaction tRNA(Ala) + L-alanine + ATP = L-alanyl-tRNA(Ala) + AMP + diphosphate. Its function is as follows. Catalyzes the attachment of alanine to tRNA(Ala) in a two-step reaction: alanine is first activated by ATP to form Ala-AMP and then transferred to the acceptor end of tRNA(Ala). Also edits incorrectly charged Ser-tRNA(Ala) and Gly-tRNA(Ala) via its editing domain. This Caldicellulosiruptor saccharolyticus (strain ATCC 43494 / DSM 8903 / Tp8T 6331) protein is Alanine--tRNA ligase.